A 576-amino-acid polypeptide reads, in one-letter code: Peroxisomal targeting signal receptor (576 aa).

A Glycyl cysteine thioester (Cys-Gly) (interchain with G-Cter in ubiquitin) cross-link involves residue C10. The tract at residues 11–33 (AAGSNPLAQFTKHTQHDTSLQQS) is amphipathic helix 1 (AH1). Residue K22 forms a Glycyl lysine isopeptide (Lys-Gly) (interchain with G-Cter in ubiquitin) linkage. The interval 58–75 (RQQMDQFMQQQNNPAFNF) is amphipathic helix 2 (AH2). 2 consecutive short sequence motifs (wxxxF/Y motif) follow at residues 100 to 104 (WNQEF) and 128 to 132 (WAQDF). The interval 176–195 (AQMQQQNPAQAQTSEQSQTQ) is disordered. Residues 196-200 (WEDQF) carry the WxxxF/Y motif 3 motif. An amphipathic helix 4 (AH4) region spans residues 224-240 (FEQVWDDIQVSYADVEL). The WxxxF/Y motif 4 motif lies at 249 to 253 (WEKDF). 7 TPR repeats span residues 278–311 (PDAY…DPKH), 312–345 (VDAW…DPTN), 346–383 (LAAL…IASR), 384–421 (ARSS…ASMD), 422–455 (ADVQ…EPDK), 456–489 (ALNW…NPNF), and 490–523 (VRAR…HEVE).

Belongs to the peroxisomal targeting signal receptor family. As to quaternary structure, interacts (via WxxxF/Y and LVxEF motifs) with PEX14; promoting translocation through the PEX13-PEX14 docking complex. Interacts with PEX8. Post-translationally, a disulfide bond is created between Cys-10 and Cys-338 or Cys-444. Monoubiquitinated at Cys-10 by PEX2 during PEX5 passage through the retrotranslocation channel: monoubiquitination acts as a signal for PEX5 extraction and is required for proper export from peroxisomes and recycling. When PEX5 recycling is compromised, polyubiquitinated at Lys-22 by PEX10 during its passage through the retrotranslocation channel, leading to its degradation.

Its subcellular location is the peroxisome membrane. It is found in the cytoplasm. The protein localises to the cytosol. It localises to the peroxisome matrix. Receptor that mediates peroxisomal import of proteins containing a C-terminal PTS1-type tripeptide peroxisomal targeting signal (SKL-type). Binds to cargo proteins containing a PTS1 peroxisomal targeting signal in the cytosol, and translocates them into the peroxisome matrix by passing through the peroxisomal docking complex along with cargo proteins. PEX5 receptor is then retrotranslocated into the cytosol, leading to release of bound cargo in the peroxisome matrix, and reset for a subsequent peroxisome import cycle. Required for PEX7 ubiquitination. This Komagataella phaffii (strain GS115 / ATCC 20864) (Yeast) protein is Peroxisomal targeting signal receptor.